The sequence spans 1073 residues: Serine/threonine-protein kinase 11-interacting protein (1073 aa).

6 LRR repeats span residues 166–187, 189–210, 212–233, 236–257, 258–279, and 283–304; these read ELQTVNFSYNSITALDDSLQLL, ALRVLDLSHNKVQDCEHYLTTL, ELEYLNLAYNFLSKVPNLGIFS, KLLTLILRNNELDSINGVEQLV, NLQHLDVAYNLLLEHAQLAPLS, and YLKKLHLEGNPLWFHQNHRSAT. Disordered stretches follow at residues 389–409, 455–533, 724–817, and 834–859; these read VKVRRASISEPSDTEHESQAL, SRSA…EKPE, EVSS…QGMK, and MGSYRYSASRGPTSSQLSMTSDSEET. Residues 515–532 show a composition bias toward acidic residues; the sequence is REEEADELMLGEEEDEKP. 2 stretches are compositionally biased toward polar residues: residues 779 to 788 and 843 to 859; these read MDTSNSTRTP and RGPTSSQLSMTSDSEET.

It belongs to the STK11IP family.

It is found in the cytoplasm. The polypeptide is Serine/threonine-protein kinase 11-interacting protein (STK11IP) (Gallus gallus (Chicken)).